Consider the following 61-residue polypeptide: Photosystem II reaction center protein K (61 aa).

The propeptide occupies 1 to 24 (MLNIFSLICICINSALHSSSFFFA). Residues 40 to 60 (MPVIPVLFFLLALVWQAAVSF) form a helical membrane-spanning segment.

It belongs to the PsbK family. In terms of assembly, PSII is composed of 1 copy each of membrane proteins PsbA, PsbB, PsbC, PsbD, PsbE, PsbF, PsbH, PsbI, PsbJ, PsbK, PsbL, PsbM, PsbT, PsbX, PsbY, PsbZ, Psb30/Ycf12, at least 3 peripheral proteins of the oxygen-evolving complex and a large number of cofactors. It forms dimeric complexes.

Its subcellular location is the plastid. It is found in the chloroplast thylakoid membrane. Its function is as follows. One of the components of the core complex of photosystem II (PSII). PSII is a light-driven water:plastoquinone oxidoreductase that uses light energy to abstract electrons from H(2)O, generating O(2) and a proton gradient subsequently used for ATP formation. It consists of a core antenna complex that captures photons, and an electron transfer chain that converts photonic excitation into a charge separation. The sequence is that of Photosystem II reaction center protein K from Liriodendron tulipifera (Tuliptree).